Reading from the N-terminus, the 104-residue chain is ATP-dependent Clp protease adapter protein ClpS (104 aa).

Belongs to the ClpS family. In terms of assembly, binds to the N-terminal domain of the chaperone ClpA.

In terms of biological role, involved in the modulation of the specificity of the ClpAP-mediated ATP-dependent protein degradation. The polypeptide is ATP-dependent Clp protease adapter protein ClpS (Paraburkholderia phymatum (strain DSM 17167 / CIP 108236 / LMG 21445 / STM815) (Burkholderia phymatum)).